A 737-amino-acid chain; its full sequence is Catalase-peroxidase (737 aa).

A disordered region spans residues 1-29 (MTDSPDATTGGCPVAHGDRLPHPTQGGAN). A cross-link (tryptophyl-tyrosyl-methioninium (Trp-Tyr) (with M-253)) is located at residues 101–227 (WHSAGTYRVS…LGATHMGLIY (127 aa)). H102 functions as the Proton acceptor in the catalytic mechanism. The segment at residues 227 to 253 (YVNPEGPEGKPDPVAAARDIRETFGRM) is a cross-link (tryptophyl-tyrosyl-methioninium (Tyr-Met) (with W-101)). H268 serves as a coordination point for heme b.

Belongs to the peroxidase family. Peroxidase/catalase subfamily. In terms of assembly, homodimer or homotetramer. Heme b serves as cofactor. Post-translationally, formation of the three residue Trp-Tyr-Met cross-link is important for the catalase, but not the peroxidase activity of the enzyme.

The enzyme catalyses H2O2 + AH2 = A + 2 H2O. The catalysed reaction is 2 H2O2 = O2 + 2 H2O. Its function is as follows. Bifunctional enzyme with both catalase and broad-spectrum peroxidase activity. The sequence is that of Catalase-peroxidase from Saccharopolyspora erythraea (strain ATCC 11635 / DSM 40517 / JCM 4748 / NBRC 13426 / NCIMB 8594 / NRRL 2338).